Here is a 360-residue protein sequence, read N- to C-terminus: MASATDNKEKQKALDSVLKTIEKTFGKGSIVRLGDATRMKVETISSGALTLDLALGGGLPKGRVIEIYGPESSGKTTLALHAIAETQKSGGIAAFVDAEHALDPTYAAALGVDIENLLVSQPDTGEMALEVVDHLVRSVAVDIVVVDSVAALVPRAEIEGDMGDSHMGLQARLMSQALRKITGNIGKSGCTVVFLNQLRQKIGVVYGNPETTTGGNALKFYASVRLDIRRTQTLKKSSEEYGIHAKVKVAKNKVAPPFRVAEFDIIFGKGISNVGCIIDLAEETDVIKRKGAWYSYQGSNFAQGREKAIAYMESNIDFAKKIEKQVRDHLSQGALVSANSVARVDEIEEDEDEDEALEEE.

69-76 (GPESSGKT) lines the ATP pocket.

Belongs to the RecA family.

It localises to the cytoplasm. Functionally, can catalyze the hydrolysis of ATP in the presence of single-stranded DNA, the ATP-dependent uptake of single-stranded DNA by duplex DNA, and the ATP-dependent hybridization of homologous single-stranded DNAs. It interacts with LexA causing its activation and leading to its autocatalytic cleavage. The polypeptide is Protein RecA (Trichodesmium erythraeum (strain IMS101)).